The following is a 224-amino-acid chain: Cytosolic-abundant heat soluble protein 77580 (224 aa).

Positions 1 to 13 (MSNYQQESSYQYS) are enriched in low complexity. The interval 1–38 (MSNYQQESSYQYSDRSNNGQQQEQQEKKEVEHSSYTHT) is disordered. The span at 24-38 (QQEKKEVEHSSYTHT) shows a compositional bias: basic and acidic residues. A coiled-coil region spans residues 83–191 (VIDTEAETEE…KRVLERSKFH (109 aa)). 2 CAHS motif regions span residues 122–140 (YRKQQEVETEKIRKELEKQ) and 159–177 (QKRQIDLEARYAKKELERE). Positions 200–215 (AAAGSTHSGSSSVAVS) are enriched in low complexity. Positions 200–224 (AAAGSTHSGSSSVAVSESEKFQTNN) are disordered.

The protein belongs to the Cytosolic-abundant heat soluble protein (CAHS) family.

It is found in the cytoplasm. In terms of biological role, CAHS proteins are cytosolic heat soluble proteins that seem to contribute to the anhydrobiosis in tardigrades, but their specific mechanisms are yet to be identified. It is possible that protection during anhydrobiosis might occur via the stabilization of vitrifying small molecules such as sugars, but not via the direct glass transition of CAHS proteins themselves. The chain is Cytosolic-abundant heat soluble protein 77580 from Hypsibius exemplaris (Freshwater tardigrade).